A 411-amino-acid chain; its full sequence is Glutamyl-tRNA reductase (411 aa).

Substrate-binding positions include 48–51, serine 106, 111–113, and glutamine 117; these read TCNR and EDQ. The active-site Nucleophile is cysteine 49. Residue 186-191 coordinates NADP(+); that stretch reads GAGDMG.

The protein belongs to the glutamyl-tRNA reductase family. Homodimer.

The catalysed reaction is (S)-4-amino-5-oxopentanoate + tRNA(Glu) + NADP(+) = L-glutamyl-tRNA(Glu) + NADPH + H(+). It functions in the pathway porphyrin-containing compound metabolism; protoporphyrin-IX biosynthesis; 5-aminolevulinate from L-glutamyl-tRNA(Glu): step 1/2. Its function is as follows. Catalyzes the NADPH-dependent reduction of glutamyl-tRNA(Glu) to glutamate 1-semialdehyde (GSA). This chain is Glutamyl-tRNA reductase, found in Clostridium novyi (strain NT).